The primary structure comprises 77 residues: Pi/alpha-stichotoxin-Hmg5b (77 aa).

Positions 1–21 (MDYQRLLFLFAVAMVITTTVA) are cleaved as a signal peptide. Residues 22 to 34 (LPKDTALMDGQLQ) constitute a propeptide that is removed on maturation. 3 disulfides stabilise this stretch: Cys-40–Cys-73, Cys-42–Cys-66, and Cys-56–Cys-74. The residue at position 52 (Met-52) is a Methionine sulfoxide; partial.

Belongs to the sea anemone type 3 (BDS) potassium channel toxin family. Post-translationally, toxin occurs in two forms in the mucus, Hmg 1b-2 which is not oxidized and Hmg 1b-2 MetOx which is oxidized at Met-52.

The protein resides in the secreted. The protein localises to the nematocyst. The non-oxidized toxin is remarkably non-selective with activity on many different ion channels. Weakly and reversibly inhibits rat and human homomeric ASIC1 (isoform ASIC1a) (IC(50)=4.8 uM, and IC(50)=14.6 uM), and ASIC3 (IC(50)=15.9 uM). Molecular modeling interaction with ASIC1a suggests that this peptide hinders the collapse of acidic pockets and stabilizes nonconducting channels state. It activates several potassium channels including Kv1.1/KCNA1, Kv1.2/KCNA2, and drosophila Shaker IR. It moderately to potently inhibits potassium channels including Kv1.3/KCNA3, Kv1.4/KCNA4, Kv1.5/KCNA5, Kv1.6/KCNA6, Kv2.1/KCNB1, Kv4.2/KCND2, Kv7.1/KCNQ1, Kv7.2/Kv7.3 (KCNQ2/KCNQ3), Kv7.4/KCNQ4, hERG/KCNH2, and C.elegans QKT1. On sodium channels, it moderately to potently inhibits Nav1.1/SCN1A, Nav1.2/SCN2A, Nav1.3/SCN3A, Nav1.4/SCN4A, Nav1.5/SCN5A, Nav1.6/SCN8A, Nav1.7/SCN9A, Nav1.8/SCN10A, and B.germanica BgNav. It also moderately to potently inhibits Cav3.1/CACNA1G, Cav3.2/CACNA1H, and Cav3.3/CACNA1I. Significant shifts in the voltage-current relationship are observed on Kv and Nav, depending on the channel isoform, whereas the toxin does not seem to modulate the voltage-sensor domains of Cav channels, acting mainly as a pore blocker. Does not activate nicotinic acetylcholine receptors (nAChR), but potentiates ACh-elicited current of human alpha-7/CHRNA7 nAChR. Is also able to bind T.californica muscle-type nAChRs. In vivo, causes an excitatory effect in mice behavior. Also shows antihyperalgesic and analgesic activity in the acid-induced muscle pain mice model, and weak anti-inflammatory effect in models of acute local inflammation. In terms of biological role, forms an oxidized toxin derivative (Hmg 1b-2 MetOx). Able to bind T.californica muscle-type nAChRs (alpha-1-beta-1-delta-epsilon (CHRNA1-CHRNB1-CHRND-CHRNE)). This is Pi/alpha-stichotoxin-Hmg5b from Heteractis magnifica (Magnificent sea anemone).